The following is a 339-amino-acid chain: uncharacterized protein (339 aa).

Residue 28 to 35 (GPINSGKT) coordinates ATP.

This sequence belongs to the archaeal ATPase family.

This is an uncharacterized protein from Pyrococcus abyssi (strain GE5 / Orsay).